The primary structure comprises 444 residues: Trigger factor (444 aa).

The 86-residue stretch at Asp160–Pro245 folds into the PPIase FKBP-type domain.

It belongs to the FKBP-type PPIase family. Tig subfamily.

It localises to the cytoplasm. It catalyses the reaction [protein]-peptidylproline (omega=180) = [protein]-peptidylproline (omega=0). Its function is as follows. Involved in protein export. Acts as a chaperone by maintaining the newly synthesized protein in an open conformation. Functions as a peptidyl-prolyl cis-trans isomerase. This chain is Trigger factor, found in Acinetobacter baumannii (strain SDF).